The following is a 665-amino-acid chain: DNA ligase (665 aa).

Residues 31 to 35, 80 to 81, and Glu-110 contribute to the NAD(+) site; these read DQEFD and SL. Residue Lys-112 is the N6-AMP-lysine intermediate of the active site. NAD(+)-binding residues include Arg-133, Glu-170, Lys-285, and Lys-309. Zn(2+) is bound by residues Cys-403, Cys-406, Cys-421, and Cys-427. The 79-residue stretch at 587 to 665 folds into the BRCT domain; it reads EHTDKLAGKS…SEEEFLQMIE (79 aa).

This sequence belongs to the NAD-dependent DNA ligase family. LigA subfamily. Mg(2+) is required as a cofactor. Requires Mn(2+) as cofactor.

It catalyses the reaction NAD(+) + (deoxyribonucleotide)n-3'-hydroxyl + 5'-phospho-(deoxyribonucleotide)m = (deoxyribonucleotide)n+m + AMP + beta-nicotinamide D-nucleotide.. Its function is as follows. DNA ligase that catalyzes the formation of phosphodiester linkages between 5'-phosphoryl and 3'-hydroxyl groups in double-stranded DNA using NAD as a coenzyme and as the energy source for the reaction. It is essential for DNA replication and repair of damaged DNA. The sequence is that of DNA ligase from Phocaeicola vulgatus (strain ATCC 8482 / DSM 1447 / JCM 5826 / CCUG 4940 / NBRC 14291 / NCTC 11154) (Bacteroides vulgatus).